A 544-amino-acid polypeptide reads, in one-letter code: Glucose starvation modulator protein 1 (544 aa).

The segment at residues 20–48 is a DNA-binding region (zn(2)-C6 fungal-type); sequence CVFCHSKHLQCSNERPCKNCMKRNLGDQC. Positions 65–93 are disordered; the sequence is KKMKSRTNSISSSYRSPSVSESPQNPYTH. Over residues 70–86 the composition is skewed to low complexity; sequence RTNSISSSYRSPSVSES. The PAS domain occupies 403–475; it reads SLIDYEKLLL…FKLFKSVAVG (73 aa).

It belongs to the ERT1/acuK family.

Its subcellular location is the nucleus. Functionally, transcription factor which regulates nonfermentable carbon utilization. The chain is Glucose starvation modulator protein 1 (GSM1) from Debaryomyces hansenii (strain ATCC 36239 / CBS 767 / BCRC 21394 / JCM 1990 / NBRC 0083 / IGC 2968) (Yeast).